A 409-amino-acid chain; its full sequence is 3-isopropylmalate dehydrogenase 1, chloroplastic (409 aa).

The transit peptide at Met-1 to Cys-37 directs the protein to the chloroplast. The residue at position 74 (Ser-74) is a Phosphoserine. Ile-118 to Glu-133 is an NAD(+) binding site. Substrate is bound by residues Arg-140, Arg-150, and Arg-178. Asn-238 provides a ligand contact to NAD(+). A substrate-binding site is contributed by Asp-268. A Mg(2+)-binding site is contributed by Asp-268. Asn-269 serves as a coordination point for NAD(+). 2 residues coordinate Mg(2+): Asp-292 and Asp-296. Position 322-338 (Glu-322–Asn-338) interacts with NAD(+).

This sequence belongs to the isocitrate and isopropylmalate dehydrogenases family. As to quaternary structure, homodimer. Mg(2+) is required as a cofactor. Mn(2+) serves as cofactor. In terms of tissue distribution, highly expressed in seedlings, leaves, stems and roots and, to a lower extent, in flowers, pollen and siliques.

It localises to the plastid. Its subcellular location is the chloroplast stroma. The enzyme catalyses (2R,3S)-3-isopropylmalate + NAD(+) = 4-methyl-2-oxopentanoate + CO2 + NADH. Its pathway is amino-acid biosynthesis; L-leucine biosynthesis; L-leucine from 3-methyl-2-oxobutanoate: step 3/4. The protein operates within secondary metabolite biosynthesis. Its activity is regulated as follows. Regulated by a thiol-based redox modification; oxidation by CuCl(2) leads to a decreased activity. Functionally, involved in both glucosinolate and leucine biosynthesis; catalyzes the oxidative decarboxylation step in both leucine biosynthesis (primary metabolism) and methionine chain elongation of glucosinolates (specialized metabolism). Catalyzes the oxidation of 3-carboxy-2-hydroxy-4-methylpentanoate (3-isopropylmalate, 3-IPM) to 3-carboxy-4-methyl-2-oxopentanoate. The product decarboxylates to 4-methyl-2 oxopentanoate. Required during pollen development and involved in embryo sac development. More active on 3-isopropylmalate and NAD(+) than towards D-malate. The polypeptide is 3-isopropylmalate dehydrogenase 1, chloroplastic (Arabidopsis thaliana (Mouse-ear cress)).